A 360-amino-acid chain; its full sequence is Variable large protein 18 (360 aa).

The N-terminal stretch at 1 to 26 (MRKRISAIINKLNISIMMMIVVLMIG) is a signal peptide. C27 carries the N-palmitoyl cysteine lipid modification. C27 carries S-diacylglycerol cysteine lipidation.

The protein belongs to the variable large protein (Vlp) family. Alpha subfamily.

Its subcellular location is the cell outer membrane. The Vlp and Vsp proteins are antigenically distinct proteins, only one vlp or vsp gene is transcriptionally active at any one time. Switching between these genes is a mechanism of host immune response evasion. The protein is Variable large protein 18 of Borrelia hermsii.